Here is a 464-residue protein sequence, read N- to C-terminus: Propanal dehydrogenase (CoA-propanoylating) (464 aa).

Positions 1–18 (MNTSELETLIRTILSEQL) are targets protein to the BMC.

Belongs to the EutE/PduP family. Interacts with BMC shell proteins PduA and PduJ, which target this protein to BMC. Interacts with PduQ, probably via the N-terminus of PduQ. Interacts with PduK, probably with its BMC-containing N-terminus.

It is found in the bacterial microcompartment. The catalysed reaction is propanal + NAD(+) + CoA = propanoyl-CoA + NADH + H(+). It participates in polyol metabolism; 1,2-propanediol degradation. In terms of biological role, a CoA-acylating aldehyde dehydrogenase required for optimal 1,2-propanediol (1,2-PD) degradation. Optimizes growth in the bacterial microcompartment (BMC) dedicated to 1,2-PD degradation by minimizing propionaldehyde toxicity. Directly targeted to the BMC. NAD(+) and NADH are regenerated internally within the Pdu BMC by the PduP and PduQ enzymes, which reduce NAD(+) and oxidize NADH respectively, although there must also be cofactor transport across the BMC. Its function is as follows. The 1,2-PD-specific bacterial microcompartment (BMC) concentrates low levels of 1,2-PD catabolic enzymes, concentrates volatile reaction intermediates thus enhancing pathway flux and keeps the level of toxic, mutagenic propionaldehyde low. The protein is Propanal dehydrogenase (CoA-propanoylating) of Salmonella typhimurium (strain LT2 / SGSC1412 / ATCC 700720).